The sequence spans 384 residues: F-box only protein 5-B (384 aa).

Disordered regions lie at residues 1 to 20 (MMCGFTSNPSPKKLLSKSSA) and 79 to 106 (DEENSSLQDSGYSSILQNDSPCQDETDS). Residues 9 to 19 (PSPKKLLSKSS) show a composition bias toward low complexity. Residues 83-99 (SSLQDSGYSSILQNDSP) are compositionally biased toward polar residues. The region spanning 191 to 238 (AELFHRDFKHLLTKILRHLNAMDLINVIGVSTTWRKILQKDNWAYNTY) is the F-box domain. A ZBR-type zinc finger spans residues 311–359 (SLKACVDCGSPAKYDSYLHRAICTRESCKLDFCTLCSCKYHSSKSCLIS). Positions 315, 318, 333, 338, 343, 346, 351, and 356 each coordinate Zn(2+).

Part of a SCF (SKP1-cullin-F-box) protein ligase complex. Interacts with btrc. Interacts with skp1. Interacts with cdc20. Interacts with pin1; stabilizes fbxo5 by preventing its association with btrc in an isomerization-dependent pathway; this interaction is present during G2 phase and prevents fbxo5 degradation. Interacts with plk1. Proteolysed; proteolysis is induced by both cyclin B-cdk1 and cyclin A-cdk1/2 complex through probable phosphorylation. Proteolysis is inhibited by pin1 during G2.

Its subcellular location is the nucleus. It is found in the cytoplasm. It localises to the cytoskeleton. The protein localises to the spindle. The protein resides in the microtubule organizing center. Its subcellular location is the centrosome. Its pathway is protein modification; protein ubiquitination. Functionally, regulates progression through early mitosis by inhibiting the anaphase promoting complex/cyclosome (APC). Binds to the APC activators cdc20 to prevent APC activation. Can also bind directly to the APC to inhibit substrate-binding. Required to arrest unfertilized eggs at metaphase of meiosis II, by preventing their release from metaphase of meiosis II, through inhibition of APC-dependent cyclin B destruction leading to stabilization of cyclin B-cdk1 complex activity. In Xenopus laevis (African clawed frog), this protein is F-box only protein 5-B (fbxo5-b).